Here is a 217-residue protein sequence, read N- to C-terminus: Probable transaldolase (217 aa).

The active-site Schiff-base intermediate with substrate is K83.

Belongs to the transaldolase family. Type 3B subfamily.

Its subcellular location is the cytoplasm. The catalysed reaction is D-sedoheptulose 7-phosphate + D-glyceraldehyde 3-phosphate = D-erythrose 4-phosphate + beta-D-fructose 6-phosphate. It functions in the pathway carbohydrate degradation; pentose phosphate pathway; D-glyceraldehyde 3-phosphate and beta-D-fructose 6-phosphate from D-ribose 5-phosphate and D-xylulose 5-phosphate (non-oxidative stage): step 2/3. Transaldolase is important for the balance of metabolites in the pentose-phosphate pathway. The protein is Probable transaldolase of Phenylobacterium zucineum (strain HLK1).